The chain runs to 347 residues: Ferrochelatase (347 aa).

Cysteine 158 contacts [2Fe-2S] cluster. Positions 193 and 272 each coordinate Fe cation. Positions 332, 339, and 341 each coordinate [2Fe-2S] cluster.

It belongs to the ferrochelatase family. As to quaternary structure, homodimer. [2Fe-2S] cluster serves as cofactor.

It localises to the cytoplasm. The catalysed reaction is heme b + 2 H(+) = protoporphyrin IX + Fe(2+). It participates in porphyrin-containing compound metabolism; protoheme biosynthesis; protoheme from protoporphyrin-IX: step 1/1. Functionally, catalyzes the ferrous insertion into protoporphyrin IX. This chain is Ferrochelatase, found in Caulobacter vibrioides (strain ATCC 19089 / CIP 103742 / CB 15) (Caulobacter crescentus).